A 339-amino-acid polypeptide reads, in one-letter code: EEIG family member 2 (339 aa).

The region spanning 1-111 (MRLLDGGSFT…ILKVLISMQL (111 aa)) is the C2 NT-type domain. S197 is subject to Phosphoserine. Residues 226–262 (TEPITAEPSPDPTAAAATATTTTAKEEEASEKLARCP) are disordered. A compositionally biased stretch (low complexity) spans 230-248 (TAEPSPDPTAAAATATTTT). Residues 249–259 (AKEEEASEKLA) are compositionally biased toward basic and acidic residues. 5 positions are modified to phosphoserine: S255, S267, S299, S300, and S329.

It belongs to the EEIG family. As to expression, expressed in bone marrow-derived macrophages.

In Mus musculus (Mouse), this protein is EEIG family member 2 (Eeig2).